A 64-amino-acid polypeptide reads, in one-letter code: Potassium channel toxin kappa-KTx 3.1 (64 aa).

The N-terminal stretch at Met1 to Ala26 is a signal peptide. Positions Glu27 to Glu36 are excised as a propeptide. 2 cysteine pairs are disulfide-bonded: Cys43–Cys61 and Cys47–Cys57.

The protein belongs to the short scorpion toxin superfamily. Potassium channel inhibitor kappa-KTx family. Kappa-KTx 3 subfamily. In terms of tissue distribution, expressed by the venom gland.

It localises to the secreted. Potassium channel inhibitor (Kv). This Heterometrus petersii (Asian forest scorpion) protein is Potassium channel toxin kappa-KTx 3.1.